A 124-amino-acid polypeptide reads, in one-letter code: Ribonuclease pancreatic (124 aa).

The span at 1 to 13 (KESAAAKFERQHM) shows a compositional bias: basic and acidic residues. The segment at 1–24 (KESAAAKFERQHMDPSMSSASSSN) is disordered. Substrate-binding residues include Lys-7 and Arg-10. His-12 (proton acceptor) is an active-site residue. 4 disulfides stabilise this stretch: Cys-26-Cys-84, Cys-40-Cys-95, Cys-58-Cys-110, and Cys-65-Cys-72. Substrate-binding positions include 41–45 (KPVNT), Lys-66, and Arg-85. The active-site Proton donor is His-119.

Belongs to the pancreatic ribonuclease family. As to quaternary structure, monomer. Interacts with and forms tight 1:1 complexes with RNH1. Dimerization of two such complexes may occur. Interaction with RNH1 inhibits this protein. As to expression, pancreas.

The protein localises to the secreted. The catalysed reaction is an [RNA] containing cytidine + H2O = an [RNA]-3'-cytidine-3'-phosphate + a 5'-hydroxy-ribonucleotide-3'-[RNA].. The enzyme catalyses an [RNA] containing uridine + H2O = an [RNA]-3'-uridine-3'-phosphate + a 5'-hydroxy-ribonucleotide-3'-[RNA].. Endonuclease that catalyzes the cleavage of RNA on the 3' side of pyrimidine nucleotides. Acts on single-stranded and double-stranded RNA. The polypeptide is Ribonuclease pancreatic (RNASE1) (Dama dama (Fallow deer)).